A 476-amino-acid polypeptide reads, in one-letter code: Probable pectin lyase F (476 aa).

The first 20 residues, 1–20 (MTLLRHLLTATALLGASVQA), serve as a signal peptide directing secretion. An intrachain disulfide couples C84 to C108. Residues N103 and N131 are each glycosylated (N-linked (GlcNAc...) asparagine). R258 is an active-site residue. N277 and N318 each carry an N-linked (GlcNAc...) asparagine glycan. A disulfide bridge links C325 with C333. An N-linked (GlcNAc...) asparagine glycan is attached at N385. The tract at residues 412–476 (FVPAYSEAGP…HHHQGHGRGY (65 aa)) is disordered. Over residues 426–453 (VPTQPSWSWRTVTNGPAPTGAPSDSPSA) the composition is skewed to polar residues. Over residues 465 to 476 (NKHHHQGHGRGY) the composition is skewed to basic residues.

Belongs to the polysaccharide lyase 1 family.

It is found in the secreted. The enzyme catalyses Eliminative cleavage of (1-&gt;4)-alpha-D-galacturonan methyl ester to give oligosaccharides with 4-deoxy-6-O-methyl-alpha-D-galact-4-enuronosyl groups at their non-reducing ends.. Its function is as follows. Pectinolytic enzymes consist of four classes of enzymes: pectin lyase, polygalacturonase, pectin methylesterase and rhamnogalacturonase. Among pectinolytic enzymes, pectin lyase is the most important in depolymerization of pectin, since it cleaves internal glycosidic bonds of highly methylated pectins. In Aspergillus niger (strain ATCC MYA-4892 / CBS 513.88 / FGSC A1513), this protein is Probable pectin lyase F (pelF).